We begin with the raw amino-acid sequence, 276 residues long: Glutamate 5-kinase (276 aa).

Lys14 contacts ATP. Residues Ser54, Asp141, and Asn157 each coordinate substrate. ATP-binding positions include 177 to 178 (SD) and 219 to 225 (TGGMLTK).

This sequence belongs to the glutamate 5-kinase family.

The protein resides in the cytoplasm. It catalyses the reaction L-glutamate + ATP = L-glutamyl 5-phosphate + ADP. It functions in the pathway amino-acid biosynthesis; L-proline biosynthesis; L-glutamate 5-semialdehyde from L-glutamate: step 1/2. Catalyzes the transfer of a phosphate group to glutamate to form L-glutamate 5-phosphate. This Listeria monocytogenes serovar 1/2a (strain ATCC BAA-679 / EGD-e) protein is Glutamate 5-kinase.